The following is a 176-amino-acid chain: PRL-1 phosphatase (176 aa).

One can recognise a Tyrosine-protein phosphatase domain in the interval 13–166; that stretch reads APALIEYKGM…YKPKARLKHK (154 aa). Residue C109 is the Phosphocysteine intermediate of the active site. C173 is subject to Cysteine methyl ester. The S-farnesyl cysteine moiety is linked to residue C173. Positions 174–176 are cleaved as a propeptide — removed in mature form; that stretch reads SVQ.

This sequence belongs to the protein-tyrosine phosphatase family. In terms of assembly, homotrimer. Interacts with uex, possibly at the plasma membrane. Expressed in the adult head (at protein level). Expressed in neurons in the antennal lobe and V-glomeruli (at protein level). Expressed in dorsocentral neurons (at protein level).

It is found in the cytoplasm. Its subcellular location is the cell membrane. The protein localises to the apicolateral cell membrane. The protein resides in the cell projection. It localises to the axon. It catalyses the reaction O-phospho-L-tyrosyl-[protein] + H2O = L-tyrosyl-[protein] + phosphate. Probable phosphatase. Inhibits growth possibly by negatively regulating Src64B-induced growth. Regulates central nervous system circuit formation and stabilization of synapse-dense terminal arbors. In dorsocentral neurons, regulates synaptogenesis in terminal arbors via modulation of the insulin receptor pathway, likely upstream of Akt1, and via reduction of PtdIns(4,5)P2 (Phosphatidylinositol 4,5-bisphosphate) levels. In the nervous system, plays a protective role together with uex in response to olfactory carbon dioxide stimulation. The chain is PRL-1 phosphatase from Drosophila melanogaster (Fruit fly).